Here is a 302-residue protein sequence, read N- to C-terminus: Putative S-adenosyl-L-methionine-dependent methyltransferase MUL_2961 (302 aa).

S-adenosyl-L-methionine contacts are provided by residues D128 and 157–158 (DL).

Belongs to the UPF0677 family.

Its function is as follows. Exhibits S-adenosyl-L-methionine-dependent methyltransferase activity. The chain is Putative S-adenosyl-L-methionine-dependent methyltransferase MUL_2961 from Mycobacterium ulcerans (strain Agy99).